The primary structure comprises 331 residues: Probable protein phosphatase 2C 1 (331 aa).

The interval 1-29 (MAASSTATRLSPPRLHAPTTPSPHLPLRR) is disordered. In terms of domain architecture, PPM-type phosphatase spans 48–292 (THLIPHPRKA…DDITVIVAQV (245 aa)). 4 residues coordinate Mn(2+): Asp79, Gly80, Asp210, and Asp283. Positions 300-331 (DEGVDEEKGQGDEQGSAVAVASSEQKEDSITT) are disordered.

It belongs to the PP2C family. It depends on Mg(2+) as a cofactor. The cofactor is Mn(2+).

The catalysed reaction is O-phospho-L-seryl-[protein] + H2O = L-seryl-[protein] + phosphate. The enzyme catalyses O-phospho-L-threonyl-[protein] + H2O = L-threonyl-[protein] + phosphate. The protein is Probable protein phosphatase 2C 1 of Oryza sativa subsp. japonica (Rice).